The sequence spans 353 residues: Tetraacyldisaccharide 4'-kinase (353 aa).

66–73 is an ATP binding site; the sequence is TVGGTGKT.

It belongs to the LpxK family.

The enzyme catalyses a lipid A disaccharide + ATP = a lipid IVA + ADP + H(+). The protein operates within glycolipid biosynthesis; lipid IV(A) biosynthesis; lipid IV(A) from (3R)-3-hydroxytetradecanoyl-[acyl-carrier-protein] and UDP-N-acetyl-alpha-D-glucosamine: step 6/6. Its function is as follows. Transfers the gamma-phosphate of ATP to the 4'-position of a tetraacyldisaccharide 1-phosphate intermediate (termed DS-1-P) to form tetraacyldisaccharide 1,4'-bis-phosphate (lipid IVA). The protein is Tetraacyldisaccharide 4'-kinase of Geobacter sulfurreducens (strain ATCC 51573 / DSM 12127 / PCA).